The primary structure comprises 242 residues: DnaJ homolog subfamily B member 3 (242 aa).

One can recognise a J domain in the interval 1 to 69; sequence MANYYEVLGV…KKRDVYDRYG (69 aa).

In terms of tissue distribution, testis specific.

May operate as a co-chaperone of the male germ cell- and haploid stage-specific Hsp70 proteins. The protein is DnaJ homolog subfamily B member 3 (DNAJB3) of Macaca fuscata fuscata (Japanese macaque).